A 43-amino-acid chain; its full sequence is Protein PsbN (43 aa).

Residues 7–29 traverse the membrane as a helical segment; sequence ITIFLSGLLVSFTGYALYTAFGQ.

It belongs to the PsbN family.

Its subcellular location is the plastid membrane. In terms of biological role, may play a role in photosystem I and II biogenesis. In Cuscuta reflexa (Southern Asian dodder), this protein is Protein PsbN.